Here is a 322-residue protein sequence, read N- to C-terminus: Sideroflexin-2 (322 aa).

Residue methionine 1 is modified to N-acetylmethionine. Transmembrane regions (helical) follow at residues methionine 100–valine 122, serine 142–methionine 164, leucine 174–isoleucine 192, valine 228–leucine 250, and proline 265–proline 287.

It belongs to the sideroflexin family.

It localises to the mitochondrion inner membrane. The protein localises to the mitochondrion outer membrane. It carries out the reaction L-serine(in) = L-serine(out). In terms of biological role, mitochondrial amino-acid transporter that mediates transport of serine into mitochondria. Involved in mitochondrial iron homeostasis by regulating heme biosynthesis. The polypeptide is Sideroflexin-2 (Bos taurus (Bovine)).